Here is a 544-residue protein sequence, read N- to C-terminus: MTRYIFITGGVVSSLGKGLASAALGALLQARGYKVRLAKLDPYLNVDPGTMSPYQHGEVYVTDDGAETDLDLGHYERFTGVAARRGDNITTGRIYSNVIAKERRGDYLGATVQVIPHVTDQIKDFIGAETTDEDFILCEIGGTVGDIESTPFLEAIRQFGNEVGPENALFIHLTLLPYIPTAGELKTKPTQHSVKELLGMGIQANILLCRADRPIPENERKKIALFCNIRPERVIAALDVDSIYQVPVSYHEEGFDTQVLAYFGLPTEGKPDLSRWTSIVERVRKPQGEVTIAVVGKYTSLLDSYKSLAEALTHGGIANNVKVKLDWIDSEIFEDESAVQRLENVHGILVPGGFGSRGTEGKIRAAQFARERKVPYFGICFGMQMAVIESARNMAGIVDAGSTELGKPGNPVVGLLGLMTEWMRGNSLEKRTEGTDVGGTMRLGTYPAKLVPGSKVAEVYGTTDITERHRHRYEVNVYYKDRLEKVGLLFSGLSPTQLPEIVEIPDHPWFIGVQFHPELKSKPFDPHPLFTSFIKAAIEQSRLV.

The segment at 1–265 is amidoligase domain; that stretch reads MTRYIFITGG…DTQVLAYFGL (265 aa). Residue serine 13 participates in CTP binding. Serine 13 provides a ligand contact to UTP. Residue 14-19 coordinates ATP; the sequence is SLGKGL. Tyrosine 54 contacts L-glutamine. Aspartate 71 serves as a coordination point for ATP. Residues aspartate 71 and glutamate 139 each coordinate Mg(2+). CTP contacts are provided by residues 146–148, 186–191, and lysine 222; these read DIE and KTKPTQ. UTP is bound by residues 186–191 and lysine 222; that span reads KTKPTQ. Valine 240 provides a ligand contact to ATP. The Glutamine amidotransferase type-1 domain occupies 291 to 543; the sequence is TIAVVGKYTS…IKAAIEQSRL (253 aa). Glycine 353 is a binding site for L-glutamine. The active-site Nucleophile; for glutamine hydrolysis is cysteine 380. L-glutamine contacts are provided by residues 381–384, glutamate 404, and arginine 472; that span reads FGMQ. Catalysis depends on residues histidine 516 and glutamate 518.

Belongs to the CTP synthase family. In terms of assembly, homotetramer.

It catalyses the reaction UTP + L-glutamine + ATP + H2O = CTP + L-glutamate + ADP + phosphate + 2 H(+). The catalysed reaction is L-glutamine + H2O = L-glutamate + NH4(+). The enzyme catalyses UTP + NH4(+) + ATP = CTP + ADP + phosphate + 2 H(+). It participates in pyrimidine metabolism; CTP biosynthesis via de novo pathway; CTP from UDP: step 2/2. With respect to regulation, allosterically activated by GTP, when glutamine is the substrate; GTP has no effect on the reaction when ammonia is the substrate. The allosteric effector GTP functions by stabilizing the protein conformation that binds the tetrahedral intermediate(s) formed during glutamine hydrolysis. Inhibited by the product CTP, via allosteric rather than competitive inhibition. Catalyzes the ATP-dependent amination of UTP to CTP with either L-glutamine or ammonia as the source of nitrogen. Regulates intracellular CTP levels through interactions with the four ribonucleotide triphosphates. This is CTP synthase from Azospirillum brasilense.